Consider the following 264-residue polypeptide: Small ribosomal subunit protein uS2 (264 aa).

This sequence belongs to the universal ribosomal protein uS2 family.

The protein is Small ribosomal subunit protein uS2 of Helicobacter pylori (strain P12).